The primary structure comprises 118 residues: MPRAKSSVVSRNRHRKILKLAKGYRGSRSKLFRVANQAVMKGLFYAYRDRRQKKRDFRKLWIARINAATRMNGLSYSRFINGLKKAGVEVNRKMLADLAVNDAKAFGQLVELAKSKLA.

It belongs to the bacterial ribosomal protein bL20 family.

Functionally, binds directly to 23S ribosomal RNA and is necessary for the in vitro assembly process of the 50S ribosomal subunit. It is not involved in the protein synthesizing functions of that subunit. The protein is Large ribosomal subunit protein bL20 of Desulforamulus reducens (strain ATCC BAA-1160 / DSM 100696 / MI-1) (Desulfotomaculum reducens).